The chain runs to 370 residues: Chaperone protein DnaJ (370 aa).

Positions D4–G68 constitute a J domain. The CR-type zinc-finger motif lies at G133–Q211. Zn(2+)-binding residues include C146, C149, C163, C166, C185, C188, C199, and C202. CXXCXGXG motif repeat units lie at residues C146 to G153, C163 to G170, C185 to G192, and C199 to G206.

This sequence belongs to the DnaJ family. In terms of assembly, homodimer. Requires Zn(2+) as cofactor.

It is found in the cytoplasm. Its function is as follows. Participates actively in the response to hyperosmotic and heat shock by preventing the aggregation of stress-denatured proteins and by disaggregating proteins, also in an autonomous, DnaK-independent fashion. Unfolded proteins bind initially to DnaJ; upon interaction with the DnaJ-bound protein, DnaK hydrolyzes its bound ATP, resulting in the formation of a stable complex. GrpE releases ADP from DnaK; ATP binding to DnaK triggers the release of the substrate protein, thus completing the reaction cycle. Several rounds of ATP-dependent interactions between DnaJ, DnaK and GrpE are required for fully efficient folding. Also involved, together with DnaK and GrpE, in the DNA replication of plasmids through activation of initiation proteins. The sequence is that of Chaperone protein DnaJ from Rickettsia prowazekii (strain Madrid E).